Consider the following 179-residue polypeptide: MEKEREDEETEGRERPEPLTDVERGIIKDTWARVYASCEDVGVTILIRFFVNFPSAKQYFSQFQDMEDPEEMEKSSQLRKHARRVMNAINTVVENLHDPEKVSSVLVLVGKAHAFKYKVEPIYFKILSGVILEILAEEFGECFTPEVQTSWSKLMAALYWHITGAYTEVGWVKLSSSAV.

The span at 1–11 (MEKEREDEETE) shows a compositional bias: acidic residues. A disordered region spans residues 1-20 (MEKEREDEETEGRERPEPLT). In terms of domain architecture, Globin spans 18–167 (PLTDVERGII…LYWHITGAYT (150 aa)). Residues His81 and His113 each contribute to the heme b site.

Belongs to the globin family. Monomeric. In terms of tissue distribution, expressed in all tissues examined, with highest levels in brain and eye, and considerably lower levels in skin, gut, heart, gill, liver and muscle.

The protein localises to the cytoplasm. It localises to the nucleus. The enzyme catalyses Fe(II)-heme b-[protein] + nitric oxide + O2 = Fe(III)-heme b-[protein] + nitrate. The catalysed reaction is Fe(III)-heme b-[protein] + nitric oxide + H2O = Fe(II)-heme b-[protein] + nitrite + 2 H(+). It catalyses the reaction 2 superoxide + 2 H(+) = H2O2 + O2. It carries out the reaction H2O2 + AH2 = A + 2 H2O. Its function is as follows. Probable multifunctional globin with a hexacoordinated heme iron required for the catalysis of various reactions depending on redox condition of the cell as well as oxygen availability. Has a nitric oxide dioxygenase (NOD) activity and is most probably involved in cell-mediated and oxygen-dependent nitric oxide consumption. Under normoxic conditions functions as a nitric oxide dioxygenase (NOD) but under hypoxic conditions the globin may switch its function to that of a nitrite (NO2) reductase (NiR), generating nitric oxide. Could also have peroxidase and superoxide dismutase activities, detoxifying reactive oxygen species and protecting cells against oxidative stress. Also binds dioxygen with low affinity and could function as an oxygen sensor but has probably no function as a respiratory oxygen carrier. This is Cytoglobin-2 from Danio rerio (Zebrafish).